The sequence spans 722 residues: MEGSRPRAPSGHLAPSPPAFDGELDLQRYSNGPAVSAGSLGMGAVSWSESRAGERRFPCPVCGKRFRFNSILALHLRAHPGAQAFQCPHCGHRAAQRALLRSHLRTHQPERPRSPAARLLLELEERALLREARLGRARSSGGMQATPATEGLARPQAPSSSAFRCPYCKGKFRTSAERERHLHILHRPWKCGLCSFGSSQEEELLHHSLTAHGAPERPLAATSAAPPPQPQPQPPPQPEPRSVPQPEPEPEPEREATPTPAPAAPEEPPAPPEFRCQVCGQSFTQSWFLKGHMRKHKASFDHACPVCGRCFKEPWFLKNHMKVHASKLGPLRAPGPASGPARAPQPPDLGLLAYEPLGPALLLAPAPTPAERREPPSLLGYLSLRAGEGRPNGEGAEPGPGRSFGGFRPLSSALPARARRHRAEEPEEEEEVVEAEEETWARGRSLGSLASLHPRPGEGPGHSASAAGAQARSTATQEENGLLVGGTRPEGGRGATGKDCPFCGKSFRSAHHLKVHLRVHTGERPYKCPHCDYAGTQSGSLKYHLQRHHREQRSGAGPGPPPEPPPPSQRGSAPQSGAKPSPQPATWVEGASSPRPPSSGAGPGSRRKPASPGRTLRNGRGGEAEPLDLSLRAGPGGEAGPGGALHRCLFCPFATGAPELMALHLQVHHSRRARGRRPPQADASPPYARVPSGETPPSPSQEGEEGSGLSRPGEAGLGGQER.

The disordered stretch occupies residues 1–21 (MEGSRPRAPSGHLAPSPPAFD). Serine 16 bears the Phosphoserine mark. 2 consecutive C2H2-type zinc fingers follow at residues 57 to 79 (FPCP…LRAH) and 85 to 107 (FQCP…LRTH). Residues 137-160 (ARSSGGMQATPATEGLARPQAPSS) form a disordered region. 2 consecutive C2H2-type zinc fingers follow at residues 163–186 (FRCP…HILH) and 189–212 (WKCG…LTAH). A disordered region spans residues 215 to 275 (PERPLAATSA…EEPPAPPEFR (61 aa)). 2 stretches are compositionally biased toward pro residues: residues 225-247 (APPP…PQPE) and 259-272 (TPAP…PAPP). 2 C2H2-type zinc fingers span residues 274 to 296 (FRCQ…MRKH) and 302 to 324 (HACP…MKVH). Residues 384-495 (LRAGEGRPNG…GTRPEGGRGA (112 aa)) are disordered. Gly residues predominate over residues 390-404 (RPNGEGAEPGPGRSF). A compositionally biased stretch (acidic residues) spans 425-438 (EPEEEEEVVEAEEE). Residues 463–477 (SASAAGAQARSTATQ) show a composition bias toward low complexity. 2 C2H2-type zinc fingers span residues 498-520 (KDCP…LRVH) and 526-548 (YKCP…LQRH). 2 disordered regions span residues 542-648 (KYHL…LHRC) and 668-722 (HHSR…GQER). The span at 558–568 (PGPPPEPPPPS) shows a compositional bias: pro residues. Residues 634 to 643 (GPGGEAGPGG) show a composition bias toward gly residues. Residues 646–668 (HRCLFCPFATGAPELMALHLQVH) form a C2H2-type 9 zinc finger. Residues 668–677 (HHSRRARGRR) show a composition bias toward basic residues. Serine 692 is modified (phosphoserine). A Phosphothreonine modification is found at threonine 695. Serine 698 carries the post-translational modification Phosphoserine.

It belongs to the krueppel C2H2-type zinc-finger protein family. As to quaternary structure, interacts with SOX9 (via C-terminus). In terms of tissue distribution, ubiquitous.

It is found in the nucleus. In terms of biological role, transcriptional regulator. Recognizes and binds 2 copies of the core DNA sequence motif 5'-GGGGG-3'. Binds to the HMGN1 promoter and may repress HMGN1 expression. Regulates SNCA expression in primary cortical neurons. Binds to the COL2A1 promoter and activates COL2A1 expression, as part of a complex with SOX9. Plays a role in chondrocyte differentiation. The chain is Zinc finger protein 219 (ZNF219) from Homo sapiens (Human).